A 1584-amino-acid chain; its full sequence is Pentafunctional AROM polypeptide (1584 aa).

The 3-dehydroquinate synthase stretch occupies residues 1–384 (MSQDTDVVSV…YEKHATVVSD (384 aa)). NAD(+) is bound by residues 46 to 48 (DTN), 83 to 86 (ETSK), 114 to 116 (GGV), and D119. R130 is a 7-phospho-2-dehydro-3-deoxy-D-arabino-heptonate binding site. Residue 139-140 (TT) participates in NAD(+) binding. 7-phospho-2-dehydro-3-deoxy-D-arabino-heptonate is bound by residues D146 and K152. K161 serves as a coordination point for NAD(+). N162 is a 7-phospho-2-dehydro-3-deoxy-D-arabino-heptonate binding site. Residues 179–182 (FLET) and N190 each bind NAD(+). E194 contributes to the Zn(2+) binding site. Residues 194–197 (EVIK) and K250 each bind 7-phospho-2-dehydro-3-deoxy-D-arabino-heptonate. Residue E260 is the Proton acceptor; for 3-dehydroquinate synthase activity of the active site. 7-phospho-2-dehydro-3-deoxy-D-arabino-heptonate contacts are provided by residues 264 to 268 (RNLLN) and H271. Residue H271 participates in Zn(2+) binding. H275 (proton acceptor; for 3-dehydroquinate synthase activity) is an active-site residue. 2 residues coordinate 7-phospho-2-dehydro-3-deoxy-D-arabino-heptonate: H287 and K356. H287 provides a ligand contact to Zn(2+). The EPSP synthase stretch occupies residues 397 to 843 (VSPFDNSVSD…WDVLRNSFKI (447 aa)). C825 (for EPSP synthase activity) is an active-site residue. Positions 863-1058 (RASVILIGMR…IQKPHSFFLS (196 aa)) are shikimate kinase. An ATP-binding site is contributed by 870–877 (GMRGAGKT). The segment at 1059–1280 (LTFPNINDAI…AAPGQLSVRQ (222 aa)) is 3-dehydroquinase. H1182 (proton acceptor; for 3-dehydroquinate dehydratase activity) is an active-site residue. K1211 (schiff-base intermediate with substrate; for 3-dehydroquinate dehydratase activity) is an active-site residue. A shikimate dehydrogenase region spans residues 1293–1584 (PKKFYLFGTP…YMVLCAKEHN (292 aa)).

In the N-terminal section; belongs to the sugar phosphate cyclases superfamily. Dehydroquinate synthase family. It in the 2nd section; belongs to the EPSP synthase family. The protein in the 3rd section; belongs to the shikimate kinase family. This sequence in the 4th section; belongs to the type-I 3-dehydroquinase family. In the C-terminal section; belongs to the shikimate dehydrogenase family. Homodimer. It depends on Zn(2+) as a cofactor.

The protein localises to the cytoplasm. The enzyme catalyses 7-phospho-2-dehydro-3-deoxy-D-arabino-heptonate = 3-dehydroquinate + phosphate. It carries out the reaction 3-dehydroquinate = 3-dehydroshikimate + H2O. The catalysed reaction is shikimate + NADP(+) = 3-dehydroshikimate + NADPH + H(+). It catalyses the reaction shikimate + ATP = 3-phosphoshikimate + ADP + H(+). The enzyme catalyses 3-phosphoshikimate + phosphoenolpyruvate = 5-O-(1-carboxyvinyl)-3-phosphoshikimate + phosphate. It participates in metabolic intermediate biosynthesis; chorismate biosynthesis; chorismate from D-erythrose 4-phosphate and phosphoenolpyruvate: step 2/7. Its pathway is metabolic intermediate biosynthesis; chorismate biosynthesis; chorismate from D-erythrose 4-phosphate and phosphoenolpyruvate: step 3/7. It functions in the pathway metabolic intermediate biosynthesis; chorismate biosynthesis; chorismate from D-erythrose 4-phosphate and phosphoenolpyruvate: step 4/7. The protein operates within metabolic intermediate biosynthesis; chorismate biosynthesis; chorismate from D-erythrose 4-phosphate and phosphoenolpyruvate: step 5/7. It participates in metabolic intermediate biosynthesis; chorismate biosynthesis; chorismate from D-erythrose 4-phosphate and phosphoenolpyruvate: step 6/7. Functionally, the AROM polypeptide catalyzes 5 consecutive enzymatic reactions in prechorismate polyaromatic amino acid biosynthesis. This chain is Pentafunctional AROM polypeptide, found in Schizosaccharomyces japonicus (strain yFS275 / FY16936) (Fission yeast).